The sequence spans 382 residues: D-galactonate dehydratase (382 aa).

Asp183 provides a ligand contact to Mg(2+). The active-site Proton donor is His185. Mg(2+)-binding residues include Glu209 and Glu235. Catalysis depends on His285, which acts as the Proton acceptor.

The protein belongs to the mandelate racemase/muconate lactonizing enzyme family. GalD subfamily. It depends on Mg(2+) as a cofactor.

It catalyses the reaction D-galactonate = 2-dehydro-3-deoxy-D-galactonate + H2O. Its pathway is carbohydrate acid metabolism; D-galactonate degradation; D-glyceraldehyde 3-phosphate and pyruvate from D-galactonate: step 1/3. Its function is as follows. Catalyzes the dehydration of D-galactonate to 2-keto-3-deoxy-D-galactonate. This chain is D-galactonate dehydratase, found in Pectobacterium atrosepticum (strain SCRI 1043 / ATCC BAA-672) (Erwinia carotovora subsp. atroseptica).